Consider the following 66-residue polypeptide: Large ribosomal subunit protein bL33c (66 aa).

This sequence belongs to the bacterial ribosomal protein bL33 family.

Its subcellular location is the plastid. The protein resides in the chloroplast. This Physcomitrium patens (Spreading-leaved earth moss) protein is Large ribosomal subunit protein bL33c.